The sequence spans 150 residues: D-aminoacyl-tRNA deacylase (150 aa).

Residues 140–141 (GP) carry the Gly-cisPro motif, important for rejection of L-amino acids motif.

The protein belongs to the DTD family. As to quaternary structure, homodimer.

The protein localises to the cytoplasm. The enzyme catalyses glycyl-tRNA(Ala) + H2O = tRNA(Ala) + glycine + H(+). The catalysed reaction is a D-aminoacyl-tRNA + H2O = a tRNA + a D-alpha-amino acid + H(+). Its function is as follows. An aminoacyl-tRNA editing enzyme that deacylates mischarged D-aminoacyl-tRNAs. Also deacylates mischarged glycyl-tRNA(Ala), protecting cells against glycine mischarging by AlaRS. Acts via tRNA-based rather than protein-based catalysis; rejects L-amino acids rather than detecting D-amino acids in the active site. By recycling D-aminoacyl-tRNA to D-amino acids and free tRNA molecules, this enzyme counteracts the toxicity associated with the formation of D-aminoacyl-tRNA entities in vivo and helps enforce protein L-homochirality. This Eremothecium gossypii (strain ATCC 10895 / CBS 109.51 / FGSC 9923 / NRRL Y-1056) (Yeast) protein is D-aminoacyl-tRNA deacylase (DTD1).